We begin with the raw amino-acid sequence, 193 residues long: DNA damage-inducible transcript 4-like protein (193 aa).

Belongs to the DDIT4 family.

It is found in the cytoplasm. Functionally, inhibits cell growth by regulating the TOR signaling pathway upstream of the TSC1-TSC2 complex and downstream of AKT1. This is DNA damage-inducible transcript 4-like protein (Ddit4l) from Mus musculus (Mouse).